Consider the following 740-residue polypeptide: DNA ligase (740 aa).

A disordered region spans residues 1 to 20 (MGPGLTLSGMTEQSSLFPAP). NAD(+)-binding positions include 56–60 (DAEYD), 105–106 (SI), and Glu-142. Lys-144 acts as the N6-AMP-lysine intermediate in catalysis. Residues Arg-165, Glu-201, Lys-322, and Lys-346 each contribute to the NAD(+) site. Positions 471, 474, 489, and 495 each coordinate Zn(2+). The BRCT domain occupies 654-740 (AATLPLAGMT…RGAPPNAGGG (87 aa)).

It belongs to the NAD-dependent DNA ligase family. LigA subfamily. Mg(2+) is required as a cofactor. Mn(2+) serves as cofactor.

The enzyme catalyses NAD(+) + (deoxyribonucleotide)n-3'-hydroxyl + 5'-phospho-(deoxyribonucleotide)m = (deoxyribonucleotide)n+m + AMP + beta-nicotinamide D-nucleotide.. Its function is as follows. DNA ligase that catalyzes the formation of phosphodiester linkages between 5'-phosphoryl and 3'-hydroxyl groups in double-stranded DNA using NAD as a coenzyme and as the energy source for the reaction. It is essential for DNA replication and repair of damaged DNA. This Acidovorax ebreus (strain TPSY) (Diaphorobacter sp. (strain TPSY)) protein is DNA ligase.